The sequence spans 67 residues: Type 3 secretion system chaperone PscE (67 aa).

Positions 16 to 37 (HAAALRQRLQAALAECRRELAR) form a coiled coil.

Belongs to the YscE family. Forms a stable ternary complex with PscF/SctF and PscG within the cytoplasm. Co-stabilized by PscG.

Its subcellular location is the cytoplasm. In terms of biological role, chaperone of the type III secretion system (T3SS), also called injectisome, which is used to inject bacterial effector proteins into eukaryotic host cells, facilitating the establishment and dissemination of infection. Along with PscG, prevents premature polymerization of the PscF/SctF needle protein within the cytoplasm. Required for type III secretion needle assembly. Also required for cytotoxicity by influencing PscF/SctF levels. The polypeptide is Type 3 secretion system chaperone PscE (pscE) (Pseudomonas aeruginosa (strain ATCC 15692 / DSM 22644 / CIP 104116 / JCM 14847 / LMG 12228 / 1C / PRS 101 / PAO1)).